Reading from the N-terminus, the 209-residue chain is Ribonuclease HII (209 aa).

The RNase H type-2 domain occupies 25–209 (RRIAGIDEAG…ATFRGVREYL (185 aa)). 3 residues coordinate a divalent metal cation: D31, E32, and D123.

The protein belongs to the RNase HII family. Mn(2+) is required as a cofactor. Mg(2+) serves as cofactor.

Its subcellular location is the cytoplasm. It catalyses the reaction Endonucleolytic cleavage to 5'-phosphomonoester.. Its function is as follows. Endonuclease that specifically degrades the RNA of RNA-DNA hybrids. This is Ribonuclease HII from Syntrophotalea carbinolica (strain DSM 2380 / NBRC 103641 / GraBd1) (Pelobacter carbinolicus).